The chain runs to 351 residues: MSFPCKFVASFLLIFNVSSKGAVSKEITNALETWGALGQDINLDIPSFQMSDDIDDIKWEKTSDKKKIAQFRKEKETFKEKDTYKLFKNGTLKIKHLKTDDQDIYKVSIYDTKGKNVLEKIFDLKIQERVSKPKISWTCINTTLTCEVMNGTDPELNLYQDGKHLKLSQRVITHKWTTSLSAKFKCTAGNKVSKESSVEPVSCPEKGLDIYLIIGICGGGSLLMVFVALLVFYITKRKKQRSRRNDEELETRAHRVATEERGRKPHQIPASTPQNPATSQHPPPPPGHRSQAPSHRPPPPGHRVQHQPQKRPPAPSGTQVHQQKGPPLPRPRVQPKPPHGAAENSLSPSSN.

The first 24 residues, 1–24, serve as a signal peptide directing secretion; that stretch reads MSFPCKFVASFLLIFNVSSKGAVS. The 104-residue stretch at 25-128 folds into the Ig-like V-type domain; that stretch reads KEITNALETW…EKIFDLKIQE (104 aa). The Extracellular segment spans residues 25 to 209; the sequence is KEITNALETW…PVSCPEKGLD (185 aa). The segment at 61-75 is CD58 binding region 1; the sequence is KTSDKKKIAQFRKEK. N89 carries N-linked (GlcNAc...) asparagine glycosylation. The interval 106–120 is CD58 binding region 2; sequence KVSIYDTKGKNVLEK. The region spanning 129-209 is the Ig-like C2-type domain; the sequence is RVSKPKISWT…PVSCPEKGLD (81 aa). Disulfide bonds link C139/C203 and C146/C186. N141 and N150 each carry an N-linked (GlcNAc...) asparagine glycan. Residues 210 to 235 traverse the membrane as a helical segment; sequence IYLIIGICGGGSLLMVFVALLVFYIT. Over 236-351 the chain is Cytoplasmic; the sequence is KRKKQRSRRN…AENSLSPSSN (116 aa). A disordered region spans residues 237–351; that stretch reads RKKQRSRRND…AENSLSPSSN (115 aa). Basic and acidic residues predominate over residues 243–262; the sequence is RRNDEELETRAHRVATEERG. Residues 269–280 are compositionally biased toward polar residues; it reads PASTPQNPATSQ. Pro residues predominate over residues 326–338; it reads PPLPRPRVQPKPP.

In terms of assembly, interacts with CD48. Interacts with CD58 (LFA-3). Interacts with CD2AP. Interacts with PSTPIP1. Interacts with FCGR3A; this interaction modulates NK cell activation and cytotoxicity. In terms of tissue distribution, expressed in natural killer cells (at protein level).

It localises to the cell membrane. In terms of biological role, CD2 interacts with lymphocyte function-associated antigen CD58 (LFA-3) and CD48/BCM1 to mediate adhesion between T-cells and other cell types. CD2 is implicated in the triggering of T-cells, the cytoplasmic domain is implicated in the signaling function. The sequence is that of T-cell surface antigen CD2 (CD2) from Homo sapiens (Human).